A 356-amino-acid chain; its full sequence is Carbohydrate sulfotransferase 10 (356 aa).

Over M1–L6 the chain is Cytoplasmic. A helical; Signal-anchor for type II membrane protein transmembrane segment spans residues L7 to L27. Topologically, residues T28–N356 are lumenal. N-linked (GlcNAc...) asparagine glycosylation occurs at N99. 3'-phosphoadenylyl sulfate contacts are provided by residues P127–Q133 and R189–S197. N228 and N316 each carry an N-linked (GlcNAc...) asparagine glycan.

Belongs to the sulfotransferase 2 family.

The protein resides in the golgi apparatus membrane. It carries out the reaction 3-O-{beta-D-GlcA-(1-&gt;[3)-alpha-D-Xyl-(1-&gt;3)-beta-D-GlcA-(1-&gt;](n)-4)-beta-D-Xyl-(1-&gt;4)-Rib-ol-P-Rib-ol-P-3-beta-D-GalNAc-(1-&gt;3)-beta-D-GlcNAc-(1-&gt;4)-O-6-P-alpha-D-Man}-L-Thr-[protein] + 3'-phosphoadenylyl sulfate = 3-O-{O-3-S-beta-D-GlcA-(1-&gt;[3)-alpha-D-Xyl-(1-&gt;3)-beta-D-GlcA-(1-&gt;](n)-4)-beta-D-Xyl-(1-&gt;4)-Rib-ol-P-Rib-ol-P-3-beta-D-GalNAc-(1-&gt;3)-beta-D-GlcNAc-(1-&gt;4)-O-6-P-alpha-D-Man}-L-Thr-[protein] + adenosine 3',5'-bisphosphate + H(+). The catalysed reaction is 17beta-estradiol 3-O-(beta-D-glucuronate) + 3'-phosphoadenylyl sulfate = 17beta-estradiol 3-O-(3-sulfo-beta-D-glucuronate) + adenosine 3',5'-bisphosphate + H(+). It catalyses the reaction 17beta-estradiol 3-O-(beta-D-glucuronate) 17-sulfate + 3'-phosphoadenylyl sulfate = 17beta-estradiol 3-O-(3-sulfo-beta-D-glucuronate) 17-sulfate + adenosine 3',5'-bisphosphate + H(+). The enzyme catalyses 17beta-estradiol 17-O-(beta-D-glucuronate) + 3'-phosphoadenylyl sulfate = 17beta-estradiol 17-O-(3-sulfo-beta-D-glucuronate) + adenosine 3',5'-bisphosphate + H(+). It carries out the reaction 16alpha,17beta-estriol 3-O-(beta-D-glucuronate) + 3'-phosphoadenylyl sulfate = 16alpha,17beta-estriol 3-O-(3-sulfo-beta-D-glucuronate) + adenosine 3',5'-bisphosphate + H(+). The catalysed reaction is 16alpha,17beta-estriol 16-O-(beta-D-glucuronate) + 3'-phosphoadenylyl sulfate = 16alpha,17beta-estriol 16-O-(3-sulfo-beta-D-glucuronate) + adenosine 3',5'-bisphosphate + H(+). It catalyses the reaction 16alpha,17beta-estriol 17-O-(beta-D-glucuronate) + 3'-phosphoadenylyl sulfate = 16alpha,17beta-estriol 17-O-(3-sulfo-beta-D-glucuronate) + adenosine 3',5'-bisphosphate + H(+). The enzyme catalyses estrone 3-O-(beta-D-glucuronate) + 3'-phosphoadenylyl sulfate = estrone 3-O-(3-sulfo-beta-D-glucuronate) + adenosine 3',5'-bisphosphate + H(+). It carries out the reaction 3alpha,20alpha-dihydroxy-5beta-pregnane 3-O-(beta-D-glucuronate) + 3'-phosphoadenylyl sulfate = 3alpha,20alpha-dihydroxy-5beta-pregnane 3-O-(3-sulfo-beta-D-glucuronate) + adenosine 3',5'-bisphosphate + H(+). The catalysed reaction is testosterone 17-O-(beta-D-glucuronate) + 3'-phosphoadenylyl sulfate = testosterone 17-O-(3-sulfo-beta-D-glucuronate) + adenosine 3',5'-bisphosphate + H(+). It catalyses the reaction 3beta-androst-5-en-17-one 3-O-(beta-D-glucuronate) + 3'-phosphoadenylyl sulfate = 3beta-androst-5-en-17-one 3-O-(3-sulfo-beta-D-glucuronate) + adenosine 3',5'-bisphosphate + H(+). The enzyme catalyses 3alpha,17alpha-dihydroxy-5beta-androstane-11-one-17beta-carboxylate 3-O-(beta-D-glucuronate) + 3'-phosphoadenylyl sulfate = 3alpha,17alpha-dihydroxy-5beta-androstane-11-one-17beta-carboxylate 3-O-(3-sulfo-beta-D-glucuronate) + adenosine 3',5'-bisphosphate + H(+). It carries out the reaction 3alpha-hydroxyetiocholan-17-one 3-O-(beta-D-glucuronate) + 3'-phosphoadenylyl sulfate = 3alpha-hydroxyetiocholan-17-one 3-O-(3-sulfo-beta-D-glucuronate) + adenosine 3',5'-bisphosphate + H(+). The protein operates within steroid metabolism. It participates in protein modification; carbohydrate sulfation. Catalyzes the transfer of sulfate from 3'-phosphoadenylyl sulfate (PAPS) to position 3 of terminal glucuronic acid of both protein- and lipid-linked oligosaccharides. Participates in biosynthesis of HNK-1 carbohydrate structure 3-O-sulfo-beta-D-GlcA-(1-&gt;3)-beta-D-Gal-(1-&gt;4)-D-GlcNAc-R, a sulfated glucuronyl-lactosaminyl residue carried by many neural recognition molecules, which is involved in cell interactions during ontogenetic development and in synaptic plasticity in the adult. May be indirectly involved in synapse plasticity of the hippocampus, via its role in HNK-1 biosynthesis. Sulfates terminal glucuronyl residue of the laminin globular (LG)-domain binding epitope on DAG1/alpha-dystroglycan and prevents further polymerization by LARGE1 glycosyltransferase. Likely defines the chain length of LG epitope, conferring binding specificity to extracellular matrix components. Plays a role in down-regulating the steroid hormones. Sulfates glucuronidated estrogens and androgens with an impact in hormone cycle and fertility. Has a preference for glucuronyl moiety at the 3-hydroxyl group of a sterol ring rather than the 17-hydroxyl group, showing high catalytic efficiency for 17beta-estradiol 3-O-(beta-D-glucuronate) and dehydroepiandrosterone 3-O-(beta-D-glucuronate) hormones. The polypeptide is Carbohydrate sulfotransferase 10 (Mus musculus (Mouse)).